A 713-amino-acid chain; its full sequence is Glycine--tRNA ligase beta subunit (713 aa).

This sequence belongs to the class-II aminoacyl-tRNA synthetase family. As to quaternary structure, tetramer of two alpha and two beta subunits.

The protein localises to the cytoplasm. It catalyses the reaction tRNA(Gly) + glycine + ATP = glycyl-tRNA(Gly) + AMP + diphosphate. This chain is Glycine--tRNA ligase beta subunit, found in Leptothrix cholodnii (strain ATCC 51168 / LMG 8142 / SP-6) (Leptothrix discophora (strain SP-6)).